The chain runs to 238 residues: Sugar fermentation stimulation protein homolog (238 aa).

It belongs to the SfsA family.

The sequence is that of Sugar fermentation stimulation protein homolog from Klebsiella pneumoniae (strain 342).